The primary structure comprises 261 residues: MFEARLVQGSILKKVLEALKDLINEACWDISSGGVNLQSMDSSHVSLVQLTLRSEGFDTYRCDRNLAMGVNLTSMSKILKCAGNEDIITLRAEDNADTLALVFEAPNQEKVSDYEMKLMDLDVEQLGIPEQEYSCVVKMPSGEFARICRDLSHIGDAVVISCAKDGVKFSASGELGNGNIKLSQTSNVDKEEEAVTIEMNEPVQLTFALRYLNFFTKATPLSPTVTLSMSTDVPLVVEYKISDMGHLKYYLAPKIEDEEGS.

Residues K14, K77, and K80 each carry the N6-acetyllysine modification. A DNA-binding region spans residues 61-80 (RCDRNLAMGVNLTSMSKILK). A disulfide bridge links C135 with C162. A Glycyl lysine isopeptide (Lys-Gly) (interchain with G-Cter in SUMO2); alternate cross-link involves residue K164. K164 participates in a covalent cross-link: Glycyl lysine isopeptide (Lys-Gly) (interchain with G-Cter in ubiquitin); alternate. A Phosphotyrosine; by EGFR modification is found at Y211. Position 248 is an N6-acetyllysine (K248). Residue K254 forms a Glycyl lysine isopeptide (Lys-Gly) (interchain with G-Cter in SUMO2) linkage.

The protein belongs to the PCNA family. As to quaternary structure, homotrimer. Interacts with p300/EP300; the interaction occurs on chromatin in UV-irradiated damaged cells. Interacts with CREBBP (via transactivation domain and C-terminus); the interaction occurs on chromatin in UV-irradiated damaged cells. Directly interacts with POLD1, POLD3 and POLD4 subunits of the DNA polymerase delta complex, POLD3 being the major interacting partner; the interaction with POLD3 is inhibited by CDKN1A/p21(CIP1). Forms a complex with activator 1 heteropentamer in the presence of ATP. Interacts with EXO1, POLH, POLK, DNMT1, ERCC5, FEN1, CDC6 and POLDIP2. Interacts with POLB. Interacts with APEX2; this interaction is triggered by reactive oxygen species and increased by misincorporation of uracil in nuclear DNA. Forms a ternary complex with DNTTIP2 and core histone. Interacts with KCTD10 and PPP1R15A. Interacts with SMARCA5/SNF2H. Interacts with BAZ1B/WSTF; the interaction is direct and is required for BAZ1B/WSTF binding to replication foci during S phase. Interacts with HLTF and SHPRH. Interacts with NUDT15; this interaction is disrupted in response to UV irradiation and acetylation. Interacts with CDKN1A/p21(CIP1) and CDT1; interacts via their PIP-box which also recruits the DCX(DTL) complex. The interaction with CDKN1A inhibits POLD3 binding. Interacts with DDX11. Interacts with EGFR; positively regulates PCNA. Interacts with PARPBP. Interacts (when ubiquitinated) with SPRTN; leading to enhance RAD18-mediated PCNA ubiquitination. Interacts (when polyubiquitinated) with ZRANB3. Interacts with SMARCAD1. Interacts with CDKN1C. Interacts with PCLAF (via PIP-box). Interacts with RTEL1 (via PIP-box); the interaction is direct and essential for the suppression of telomere fragility. Interacts with FAM111A (via PIP-box); the interaction is direct and required for PCNA loading on chromatin binding. Interacts with LIG1. Interacts with SETMAR. Interacts with ANKRD17. Interacts with FBXO18/FBH1 (via PIP-box); the interaction recruits the DCX(DTL) complex and promotes ubiquitination and degradation of FBXO18/FBH1. Interacts with POLN. Interacts with SDE2 (via PIP-box); the interaction is direct and prevents ultraviolet light induced monoubiquitination. Component of the replisome complex composed of at least DONSON, MCM2, MCM7, PCNA and TICRR; interaction at least with PCNA occurs during DNA replication. Interacts with MAPK15; the interaction is chromatin binding dependent and prevents MDM2-mediated PCNA destruction by inhibiting the association of PCNA with MDM2. Interacts with PARP10 (via PIP-box). Interacts with DDI2. Interacts with HMCES (via PIP-box). Interacts with TRAIP (via PIP-box). Interacts with UHRF2. Interacts with ALKBH2; this interaction is enhanced during the S-phase of the cell cycle. Interacts with ATAD5; the interaction promotes USP1-mediated PCNA deubiquitination. Interacts (when phosphorylated) with GRB2. Interacts with ANG. Interacts with nuclear UNG; this interaction mediates UNG recruitment to S-phase replication foci. Interacts with ERCC6L2 (via an atypical PIP-box); this interaction facilitates cenrtomeric localization of ERCC6L2. Phosphorylated. Phosphorylation at Tyr-211 by EGFR stabilizes chromatin-associated PCNA. In terms of processing, acetylated by CREBBP and p300/EP300; preferentially acetylated by CREBBP on Lys-80, Lys-13 and Lys-14 and on Lys-77 by p300/EP300 upon loading on chromatin in response to UV irradiation. Lysine acetylation disrupts association with chromatin, hence promoting PCNA ubiquitination and proteasomal degradation in response to UV damage in a CREBBP- and EP300-dependent manner. Acetylation disrupts interaction with NUDT15 and promotes degradation. Post-translationally, ubiquitinated. Following DNA damage, can be either monoubiquitinated to stimulate direct bypass of DNA lesions by specialized DNA polymerases or polyubiquitinated to promote recombination-dependent DNA synthesis across DNA lesions by template switching mechanisms. Following induction of replication stress, monoubiquitinated by the UBE2B-RAD18 complex on Lys-164, leading to recruit translesion (TLS) polymerases, which are able to synthesize across DNA lesions in a potentially error-prone manner. An error-free pathway also exists and requires non-canonical polyubiquitination on Lys-164 through 'Lys-63' linkage of ubiquitin moieties by the E2 complex UBE2N-UBE2V2 and the E3 ligases, HLTF, RNF8 and SHPRH. This error-free pathway, also known as template switching, employs recombination mechanisms to synthesize across the lesion, using as a template the undamaged, newly synthesized strand of the sister chromatid. Monoubiquitination at Lys-164 also takes place in undamaged proliferating cells, and is mediated by the DCX(DTL) complex, leading to enhance PCNA-dependent translesion DNA synthesis. Sumoylated during S phase. Methylated on glutamate residues by ARMT1.

The protein localises to the nucleus. Its function is as follows. Auxiliary protein of DNA polymerase delta and epsilon, is involved in the control of eukaryotic DNA replication by increasing the polymerase's processibility during elongation of the leading strand. Induces a robust stimulatory effect on the 3'-5' exonuclease and 3'-phosphodiesterase, but not apurinic-apyrimidinic (AP) endonuclease, APEX2 activities. Has to be loaded onto DNA in order to be able to stimulate APEX2. Plays a key role in DNA damage response (DDR) by being conveniently positioned at the replication fork to coordinate DNA replication with DNA repair and DNA damage tolerance pathways. Acts as a loading platform to recruit DDR proteins that allow completion of DNA replication after DNA damage and promote postreplication repair: Monoubiquitinated PCNA leads to recruitment of translesion (TLS) polymerases, while 'Lys-63'-linked polyubiquitination of PCNA is involved in error-free pathway and employs recombination mechanisms to synthesize across the lesion. In Cricetulus griseus (Chinese hamster), this protein is Proliferating cell nuclear antigen (PCNA).